Consider the following 424-residue polypeptide: O-methyltransferase aunD (424 aa).

Position 275 (aspartate 275) interacts with S-adenosyl-L-methionine. Catalysis depends on histidine 326, which acts as the Proton acceptor.

Belongs to the class I-like SAM-binding methyltransferase superfamily. Cation-independent O-methyltransferase family.

It participates in secondary metabolite biosynthesis. Functionally, O-methyltransferase; part of the gene cluster that mediates the biosynthesis of aurasperone B, a dimeric gamma-naphthopyrone. The first step in the biosynthesis of aurasperone B is the production of gamma-naphthopyrone precursor YWA1 by the non-reducing polyketide synthase albA, via condensation of one acetyl-CoA starter unit with 6 malonyl-CoA units. YWA1 is then methylated by aunE at position C-6 to yield foncesin which is further methylated at position C-8 by aunD to produce fonsecin B. A key enzyme in the biosynthetic pathway is the cytochrome P450 monooxygenase aunB which catalyzes the oxidative dimerization of fonsecin B to aurasperone B. AunB also catalyzes the oxidative dimerization of rubrofusarin B into aurasperone A. The chain is O-methyltransferase aunD from Aspergillus niger (strain ATCC 1015 / CBS 113.46 / FGSC A1144 / LSHB Ac4 / NCTC 3858a / NRRL 328 / USDA 3528.7).